A 427-amino-acid chain; its full sequence is 3-phosphoshikimate 1-carboxyvinyltransferase (427 aa).

Residues K22, S23, and R27 each coordinate 3-phosphoshikimate. Position 22 (K22) interacts with phosphoenolpyruvate. Residues G96 and R124 each contribute to the phosphoenolpyruvate site. Residues S169, S170, Q171, S197, D313, N336, and K340 each contribute to the 3-phosphoshikimate site. Q171 lines the phosphoenolpyruvate pocket. Residue D313 is the Proton acceptor of the active site. Residues R344, R386, and K411 each contribute to the phosphoenolpyruvate site.

Belongs to the EPSP synthase family. In terms of assembly, monomer.

It is found in the cytoplasm. It catalyses the reaction 3-phosphoshikimate + phosphoenolpyruvate = 5-O-(1-carboxyvinyl)-3-phosphoshikimate + phosphate. Its pathway is metabolic intermediate biosynthesis; chorismate biosynthesis; chorismate from D-erythrose 4-phosphate and phosphoenolpyruvate: step 6/7. In terms of biological role, catalyzes the transfer of the enolpyruvyl moiety of phosphoenolpyruvate (PEP) to the 5-hydroxyl of shikimate-3-phosphate (S3P) to produce enolpyruvyl shikimate-3-phosphate and inorganic phosphate. This chain is 3-phosphoshikimate 1-carboxyvinyltransferase, found in Salmonella arizonae (strain ATCC BAA-731 / CDC346-86 / RSK2980).